Here is a 114-residue protein sequence, read N- to C-terminus: MEIAGKIACFVVLCMVVAAPCAEAITCGQVTSNLAPCLAYLRNTGPLGRCCGGVKALVNSARTTEDRQIACTCLKSAAGAISGINLGKAAGLPSTCGVNIPYKISPSTDCSKVQ.

Residues 1 to 23 (MEIAGKIACFVVLCMVVAAPCAE) form the signal peptide. Intrachain disulfides connect Cys-27–Cys-73, Cys-37–Cys-50, Cys-51–Cys-96, and Cys-71–Cys-110.

It belongs to the plant LTP family. In terms of tissue distribution, high expression in leaf epidermis and shoot apex, and also in root epidermis during seedling germination.

Its function is as follows. Plant non-specific lipid-transfer proteins transfer phospholipids as well as galactolipids across membranes. Binds cis-unsaturated fatty acids and jasmonic acid with a higher affinity than linear chain fatty acids. Formation of the complex with jasmonic acid results in a conformational change facilitating the LPT1 binding on the elicitin plasma membrane receptor that is known to be involved in plant defense induction. May also play a role in wax or cutin deposition in the cell walls of expanding epidermal cells and certain secretory tissues. This Nicotiana tabacum (Common tobacco) protein is Non-specific lipid-transfer protein 1 (LTP1).